Here is a 146-residue protein sequence, read N- to C-terminus: Pseudoazurin (146 aa).

The signal sequence occupies residues Met1–Ala23. The Plastocyanin-like domain occupies Val28–Gly116. 4 residues coordinate Cu cation: His63, Cys101, His104, and Met109.

Requires Cu cation as cofactor.

The protein localises to the periplasm. Its function is as follows. This soluble electron transfer copper protein is required for the inactivation of copper-containing nitrite reductase in the presence of oxygen. Serves as a direct electron donor to the nitrite reductase. The polypeptide is Pseudoazurin (Alcaligenes faecalis).